The sequence spans 119 residues: uncharacterized protein (119 aa).

3 consecutive transmembrane segments (helical) span residues 28–48 (AWTT…HLVF), 55–75 (IEVV…NLAI), and 80–100 (PIGK…GIIV).

The protein to M.tuberculosis Rv1342c.

Its subcellular location is the cell membrane. This is an uncharacterized protein from Mycobacterium leprae (strain TN).